A 324-amino-acid chain; its full sequence is tRNA dimethylallyltransferase (324 aa).

17-24 (GPTASGKT) is a binding site for ATP. 19–24 (TASGKT) serves as a coordination point for substrate. Interaction with substrate tRNA stretches follow at residues 42–45 (DSAL), 166–170 (QRIQR), and 251–256 (RCVGYR).

Belongs to the IPP transferase family. Monomer. The cofactor is Mg(2+).

The enzyme catalyses adenosine(37) in tRNA + dimethylallyl diphosphate = N(6)-dimethylallyladenosine(37) in tRNA + diphosphate. In terms of biological role, catalyzes the transfer of a dimethylallyl group onto the adenine at position 37 in tRNAs that read codons beginning with uridine, leading to the formation of N6-(dimethylallyl)adenosine (i(6)A). In Burkholderia pseudomallei (strain 1106a), this protein is tRNA dimethylallyltransferase.